Reading from the N-terminus, the 328-residue chain is Peroxidase 71 (328 aa).

Positions 1–23 (MGLVRSLCLLITFLNCLIISVHG) are cleaved as a signal peptide. Cystine bridges form between Cys44–Cys120, Cys77–Cys82, Cys126–Cys324, and Cys204–Cys235. Catalysis depends on His75, which acts as the Proton acceptor. Residues Asp76, Val79, Gly81, Asp83, and Ser85 each contribute to the Ca(2+) site. Pro167 contributes to the substrate binding site. His197 is a heme b binding site. Position 198 (Thr198) interacts with Ca(2+). Asn213 carries N-linked (GlcNAc...) asparagine glycosylation. Asp248, Ser251, and Asp256 together coordinate Ca(2+). Residue Asn262 is glycosylated (N-linked (GlcNAc...) asparagine).

It belongs to the peroxidase family. Classical plant (class III) peroxidase subfamily. It depends on heme b as a cofactor. Requires Ca(2+) as cofactor. As to expression, slightly expressed in roots.

It localises to the secreted. It catalyses the reaction 2 a phenolic donor + H2O2 = 2 a phenolic radical donor + 2 H2O. Functionally, removal of H(2)O(2), oxidation of toxic reductants, biosynthesis and degradation of lignin, suberization, auxin catabolism, response to environmental stresses such as wounding, pathogen attack and oxidative stress. These functions might be dependent on each isozyme/isoform in each plant tissue. In Arabidopsis thaliana (Mouse-ear cress), this protein is Peroxidase 71 (PER71).